The chain runs to 619 residues: DNA mismatch repair protein MutL (619 aa).

The protein belongs to the DNA mismatch repair MutL/HexB family.

In terms of biological role, this protein is involved in the repair of mismatches in DNA. It is required for dam-dependent methyl-directed DNA mismatch repair. May act as a 'molecular matchmaker', a protein that promotes the formation of a stable complex between two or more DNA-binding proteins in an ATP-dependent manner without itself being part of a final effector complex. This is DNA mismatch repair protein MutL from Shewanella frigidimarina (strain NCIMB 400).